The following is a 213-amino-acid chain: Glycerol-3-phosphate acyltransferase (213 aa).

Transmembrane regions (helical) follow at residues 3 to 23 (IIIL…GLWI), 48 to 68 (ILGV…GTLA), 71 to 91 (LPLI…LAVI), 119 to 139 (PFFL…FSMI), 144 to 164 (VVAA…GFIL), and 165 to 185 (TSYD…IIFR).

The protein belongs to the PlsY family. As to quaternary structure, probably interacts with PlsX.

The protein localises to the cell membrane. It carries out the reaction an acyl phosphate + sn-glycerol 3-phosphate = a 1-acyl-sn-glycero-3-phosphate + phosphate. Its pathway is lipid metabolism; phospholipid metabolism. Functionally, catalyzes the transfer of an acyl group from acyl-phosphate (acyl-PO(4)) to glycerol-3-phosphate (G3P) to form lysophosphatidic acid (LPA). This enzyme utilizes acyl-phosphate as fatty acyl donor, but not acyl-CoA or acyl-ACP. The chain is Glycerol-3-phosphate acyltransferase from Lactococcus lactis subsp. cremoris (strain SK11).